The primary structure comprises 624 residues: DNA mismatch repair protein MutL (624 aa).

Basic and acidic residues predominate over residues 340–355 (NKLDTDSHSQSHERGH). The tract at residues 340 to 415 (NKLDTDSHSQ…RGGATSSYRQ (76 aa)) is disordered. Composition is skewed to polar residues over residues 372-383 (HQTAPSTKASTE) and 391-415 (SPIS…SYRQ).

Belongs to the DNA mismatch repair MutL/HexB family.

In terms of biological role, this protein is involved in the repair of mismatches in DNA. It is required for dam-dependent methyl-directed DNA mismatch repair. May act as a 'molecular matchmaker', a protein that promotes the formation of a stable complex between two or more DNA-binding proteins in an ATP-dependent manner without itself being part of a final effector complex. The chain is DNA mismatch repair protein MutL from Shewanella sediminis (strain HAW-EB3).